Reading from the N-terminus, the 328-residue chain is Apoptosis facilitator Bcl-2-like protein 14 (328 aa).

Position 44 is a phosphoserine (Ser-44). The short motif at 213–227 is the BH3 element; that stretch reads IVELLKFSGDQLGRE. A BH2 motif is present at residues 309–316; that stretch reads WVQQNGGW.

This sequence belongs to the Bcl-2 family. In terms of processing, phosphorylated by MELK, leading to inhibit its pro-apoptotic function.

It localises to the cytoplasm. Its function is as follows. Plays a role in apoptosis. This is Apoptosis facilitator Bcl-2-like protein 14 (Bcl2l14) from Mus musculus (Mouse).